The primary structure comprises 307 residues: UDP-N-acetylenolpyruvoylglucosamine reductase (307 aa).

In terms of domain architecture, FAD-binding PCMH-type spans 29–197 (RVGGPAEWFA…LSARFRLDPG (169 aa)). Arg176 is a catalytic residue. Ser227 (proton donor) is an active-site residue. Residue Glu297 is part of the active site.

This sequence belongs to the MurB family. The cofactor is FAD.

It is found in the cytoplasm. It catalyses the reaction UDP-N-acetyl-alpha-D-muramate + NADP(+) = UDP-N-acetyl-3-O-(1-carboxyvinyl)-alpha-D-glucosamine + NADPH + H(+). The protein operates within cell wall biogenesis; peptidoglycan biosynthesis. In terms of biological role, cell wall formation. The sequence is that of UDP-N-acetylenolpyruvoylglucosamine reductase from Prochlorococcus marinus (strain MIT 9313).